A 396-amino-acid chain; its full sequence is MSEYSLFTSESVSEGHPDKIADQISDAVLDAIITQDKYARVACETLVKTGVAIIAGEVTTSAWVDLEELVRKVIIDIGYNSSDVGFDGATCAVMNIIGKQSVDIAQGVDRSKPEDQGAGDQGLMFGYASNETDVLMPAPICFSHRLVERQAEARKSGLLPWLRPDAKSQVTCRYENGKVVGIDAVVLSTQHNPEVSQKDLQEAVMELIVKHTLPAELLHKDTQYHINPTGNFIIGGPVGDCGLTGRKIIVDSYGGMARHGGGAFSGKDPSKVDRSAAYAGRYVAKNIVAAGLAERCEIQVSYAIGVAQPTSISINTFGTGKVSDDKIIQLVRECFDLRPYAITKMLDLLHPMYQETAAYGHFGRTPQQKTVGDDTFTTFTWERTDRAQSLRDAAGL.

Residue His-16 participates in ATP binding. Asp-18 contacts Mg(2+). K(+) is bound at residue Glu-44. Residues Glu-57 and Gln-100 each coordinate L-methionine. The segment at 100–110 (QSVDIAQGVDR) is flexible loop. ATP contacts are provided by residues 165 to 167 (DAK), Asp-240, 246 to 247 (RK), Ala-263, and Lys-267. Position 240 (Asp-240) interacts with L-methionine. Lys-271 provides a ligand contact to L-methionine.

The protein belongs to the AdoMet synthase family. In terms of assembly, homotetramer; dimer of dimers. Mg(2+) serves as cofactor. K(+) is required as a cofactor.

It localises to the cytoplasm. It carries out the reaction L-methionine + ATP + H2O = S-adenosyl-L-methionine + phosphate + diphosphate. The protein operates within amino-acid biosynthesis; S-adenosyl-L-methionine biosynthesis; S-adenosyl-L-methionine from L-methionine: step 1/1. Catalyzes the formation of S-adenosylmethionine (AdoMet) from methionine and ATP. The overall synthetic reaction is composed of two sequential steps, AdoMet formation and the subsequent tripolyphosphate hydrolysis which occurs prior to release of AdoMet from the enzyme. The chain is S-adenosylmethionine synthase from Pseudomonas putida (strain W619).